We begin with the raw amino-acid sequence, 430 residues long: Histidinol dehydrogenase (430 aa).

The NAD(+) site is built by Tyr-129, Gln-190, and Asn-213. Ser-236, Gln-258, and His-261 together coordinate substrate. Residues Gln-258 and His-261 each contribute to the Zn(2+) site. Active-site proton acceptor residues include Glu-326 and His-327. Substrate is bound by residues His-327, Asp-360, Glu-414, and His-419. A Zn(2+)-binding site is contributed by Asp-360. Zn(2+) is bound at residue His-419.

This sequence belongs to the histidinol dehydrogenase family. The cofactor is Zn(2+).

The catalysed reaction is L-histidinol + 2 NAD(+) + H2O = L-histidine + 2 NADH + 3 H(+). Its pathway is amino-acid biosynthesis; L-histidine biosynthesis; L-histidine from 5-phospho-alpha-D-ribose 1-diphosphate: step 9/9. Catalyzes the sequential NAD-dependent oxidations of L-histidinol to L-histidinaldehyde and then to L-histidine. The polypeptide is Histidinol dehydrogenase (Caldanaerobacter subterraneus subsp. tengcongensis (strain DSM 15242 / JCM 11007 / NBRC 100824 / MB4) (Thermoanaerobacter tengcongensis)).